Reading from the N-terminus, the 361-residue chain is Putative agmatine deiminase (361 aa).

Cysteine 354 serves as the catalytic Amidino-cysteine intermediate.

Belongs to the agmatine deiminase family.

It catalyses the reaction agmatine + H2O = N-carbamoylputrescine + NH4(+). The sequence is that of Putative agmatine deiminase from Streptococcus pneumoniae (strain P1031).